The sequence spans 3159 residues: E1A-binding protein p400 (3159 aa).

Residues 1–16 are compositionally biased toward polar residues; the sequence is MHHGTGPQNVQHQLQR. Disordered regions lie at residues 1–65, 125–154, 212–261, 282–359, 545–594, 633–658, and 684–770; these read MHHG…MNRS, SPLS…RAGA, PGTP…HITT, VLQG…PASP, LMPT…PQLP, QQPN…AQLA, and TRLP…SQDT. Pro residues predominate over residues 31–41; sequence HPNPPPSPAAP. A compositionally biased stretch (low complexity) spans 42–55; sequence FAPSASPSAPQSPS. The residue at position 53 (Ser-53) is a Phosphoserine. Positions 56–65 are enriched in polar residues; that stretch reads YQIQQLMNRS. Composition is skewed to low complexity over residues 125–137 and 237–256; these read SPLS…QSPT and LGPQ…LASP. Ser-135 is subject to Phosphoserine. Phosphoserine is present on residues Ser-315 and Ser-321. The segment covering 558–571 has biased composition (low complexity); the sequence is QAAQLAGQRQSQQQ. The segment covering 572–585 has biased composition (polar residues); the sequence is YDPSTGPPVQNAAS. Pro residues-rich tracts occupy residues 637–653 and 689–698; these read VPIP…PPSQ and DPAPPCPRPL. Low complexity predominate over residues 699–711; the sequence is PTSSTSSLAPVSG. Polar residues-rich tracts occupy residues 725–742 and 751–760; these read NRPS…TSRT and TKPQSPAQNA. 2 positions are modified to phosphoserine: Ser-736 and Ser-755. Positions 761-770 are enriched in low complexity; it reads TSSQDSSQDT. The region spanning 799 to 871 is the HSA domain; that stretch reads LPKLQEAPRP…EQSRLRRIAA (73 aa). Disordered stretches follow at residues 915–967 and 997–1024; these read ELRP…GVVD and SSQW…GDRE. Phosphoserine is present on residues Ser-928 and Ser-941. Position 945 is a phosphothreonine (Thr-945). 2 stretches are compositionally biased toward acidic residues: residues 945-962 and 1008-1019; these read TDDE…EEAN and EDTSGEEDADDC. The interactions with RUVBL1 and RUVBL2 stretch occupies residues 951-1365; it reads DEEETIEEEE…NVLSILVRLQ (415 aa). Ser-1011 bears the Phosphoserine mark. The region spanning 1103–1268 is the Helicase ATP-binding domain; that stretch reads AKLYRKNLNG…WTMVHFLVPG (166 aa). Residue 1116–1123 coordinates ATP; the sequence is DEAGLGKT. The short motif at 1219–1222 is the DEAH box-like element; sequence DEMQ. Residues 1467 to 1582 are disordered; it reads VQYGQKPEGR…QAPSHAAGQS (116 aa). N6-acetyllysine is present on Lys-1472. Low complexity-rich tracts occupy residues 1481-1498 and 1538-1565; these read PSTH…SAAP and PASA…ASTP. Ser-1547, Ser-1728, and Ser-1732 each carry phosphoserine. Residues 1787 to 1807 form a disordered region; the sequence is GSLDGRRGKEAGPAHSYTSSS. The segment covering 1789–1798 has biased composition (basic and acidic residues); the sequence is LDGRRGKEAG. The Helicase C-terminal domain maps to 1899–2056; the sequence is KLEALAILLQ…GNDYSMAFLT (158 aa). 2 disordered regions span residues 2119-2144 and 2287-2311; these read KSAQ…PCDE and KERK…GEAV. 2 positions are modified to N6-acetyllysine: Lys-2349 and Lys-2356. In terms of domain architecture, Myb-like spans 2360–2429; sequence EPGQDNPEWL…QCRNRYENVI (70 aa). Disordered stretches follow at residues 2524-2602 and 2665-2688; these read KEKK…AQPA and TPGG…GSPA. The interval 2524-2789 is interaction with ZNF42; sequence KEKKALADQQ…QQQQQTTTTS (266 aa). The segment covering 2530-2540 has biased composition (low complexity); it reads ADQQKAQQPAV. Composition is skewed to pro residues over residues 2541–2563 and 2572–2589; these read AQPP…PLPQ and PAGP…PQTQ. Low complexity predominate over residues 2590–2602; the sequence is PQPVQAPAKAQPA. Ser-2686 carries the post-translational modification Phosphoserine. Thr-2813 is modified (phosphothreonine). 2 disordered regions span residues 2821–2869 and 3115–3159; these read QKQK…TAPR and APLQ…PPCQ. Over residues 2828 to 2843 the composition is skewed to pro residues; sequence PPQPPPPQAQSAPPQP. Over residues 2844-2866 the composition is skewed to low complexity; sequence TAQVQVQTSQPPQQQSPQLTTVT. Residues 3129 to 3140 show a composition bias toward polar residues; that stretch reads PASSDSPSQQPK.

It belongs to the SNF2/RAD54 helicase family. SWR1 subfamily. Component of the NuA4 histone acetyltransferase complex which contains the catalytic subunit KAT5/TIP60 and the subunits EP400, TRRAP/PAF400, BRD8/SMAP, EPC1, DMAP1/DNMAP1, RUVBL1/TIP49, RUVBL2, ING3, actin, ACTL6A/BAF53A, MORF4L1/MRG15, MORF4L2/MRGX, MRGBP, YEATS4/GAS41, VPS72/YL1 and MEAF6. May also participate in the formation of NuA4 related complexes which lack the KAT5/TIP60 catalytic subunit, but which include the SWI/SNF related protein SRCAP. The NuA4 complex interacts with MYC and the adenovirus E1A protein. EP400 interacts with TRRAP, RUVBL1 and RUVBL2. Component of a SWR1-like complex. Interacts with ZNF42. Interacts with PHF5A. Interacts with human cytomegalovirus UL27. Interacts with human adenovirus 5 E1A protein; this interaction stabilizes MYC. Ubiquitously expressed.

It localises to the nucleus. In terms of biological role, component of the NuA4 histone acetyltransferase complex which is involved in transcriptional activation of select genes principally by acetylation of nucleosomal histones H4 and H2A. This modification may both alter nucleosome - DNA interactions and promote interaction of the modified histones with other proteins which positively regulate transcription. May be required for transcriptional activation of E2F1 and MYC target genes during cellular proliferation. The NuA4 complex ATPase and helicase activities seem to be, at least in part, contributed by the association of RUVBL1 and RUVBL2 with EP400. May regulate ZNF42 transcription activity. Component of a SWR1-like complex that specifically mediates the removal of histone H2A.Z/H2AZ1 from the nucleosome. The polypeptide is E1A-binding protein p400 (EP400) (Homo sapiens (Human)).